Reading from the N-terminus, the 126-residue chain is Lymphocyte antigen 6 complex locus protein G6c (126 aa).

The first 19 residues, 1-19 (MKHLLLLTLSALLYCWVSA), serve as a signal peptide directing secretion. The 92-residue stretch at 21–112 (TRCHSCYKVP…PRPTPALALI (92 aa)) folds into the UPAR/Ly6 domain. 3 disulfides stabilise this stretch: cysteine 23/cysteine 48, cysteine 26/cysteine 34, and cysteine 40/cysteine 66. Asparagine 89 carries an N-linked (GlcNAc...) (high mannose) asparagine glycan. Cysteines 93 and 98 form a disulfide. The GPI-anchor amidated serine moiety is linked to residue serine 100. The propeptide at 101 to 126 (PAPRPTPALALISLTSLAGLGLWLLH) is removed in mature form.

Monomer. N-glycosylated. In terms of tissue distribution, highly expressed at the leading edges of cells, on filopodia.

It localises to the cell membrane. In Mus musculus (Mouse), this protein is Lymphocyte antigen 6 complex locus protein G6c (Ly6g6c).